Here is a 162-residue protein sequence, read N- to C-terminus: NADH-quinone oxidoreductase subunit I (162 aa).

2 consecutive 4Fe-4S ferredoxin-type domains span residues 53–83 and 93–122; these read LRRY…IESE and TRYD…ETRV. C63, C66, C69, C73, C102, C105, C108, and C112 together coordinate [4Fe-4S] cluster.

The protein belongs to the complex I 23 kDa subunit family. As to quaternary structure, NDH-1 is composed of 14 different subunits. Subunits NuoA, H, J, K, L, M, N constitute the membrane sector of the complex. [4Fe-4S] cluster is required as a cofactor.

It localises to the cell inner membrane. It catalyses the reaction a quinone + NADH + 5 H(+)(in) = a quinol + NAD(+) + 4 H(+)(out). Functionally, NDH-1 shuttles electrons from NADH, via FMN and iron-sulfur (Fe-S) centers, to quinones in the respiratory chain. The immediate electron acceptor for the enzyme in this species is believed to be ubiquinone. Couples the redox reaction to proton translocation (for every two electrons transferred, four hydrogen ions are translocated across the cytoplasmic membrane), and thus conserves the redox energy in a proton gradient. This Nitrosomonas europaea (strain ATCC 19718 / CIP 103999 / KCTC 2705 / NBRC 14298) protein is NADH-quinone oxidoreductase subunit I.